The primary structure comprises 224 residues: uncharacterized protein (224 aa).

It to M.tuberculosis Rv2558.

This is an uncharacterized protein from Mycobacterium tuberculosis (strain CDC 1551 / Oshkosh).